The primary structure comprises 96 residues: Muconolactone Delta-isomerase 2 (96 aa).

Belongs to the muconolactone Delta-isomerase family. As to quaternary structure, homodecamer.

The enzyme catalyses (S)-muconolactone = (4,5-dihydro-5-oxofuran-2-yl)-acetate. The protein operates within aromatic compound metabolism; beta-ketoadipate pathway; 5-oxo-4,5-dihydro-2-furylacetate from catechol: step 3/3. In Acinetobacter lwoffii, this protein is Muconolactone Delta-isomerase 2 (catC2).